A 427-amino-acid chain; its full sequence is Light-independent protochlorophyllide reductase subunit N (427 aa).

Cysteine 32, cysteine 57, and cysteine 118 together coordinate [4Fe-4S] cluster.

It belongs to the BchN/ChlN family. In terms of assembly, protochlorophyllide reductase is composed of three subunits; BchL, BchN and BchB. Forms a heterotetramer of two BchB and two BchN subunits. The cofactor is [4Fe-4S] cluster.

The enzyme catalyses chlorophyllide a + oxidized 2[4Fe-4S]-[ferredoxin] + 2 ADP + 2 phosphate = protochlorophyllide a + reduced 2[4Fe-4S]-[ferredoxin] + 2 ATP + 2 H2O. It participates in porphyrin-containing compound metabolism; bacteriochlorophyll biosynthesis (light-independent). Functionally, component of the dark-operative protochlorophyllide reductase (DPOR) that uses Mg-ATP and reduced ferredoxin to reduce ring D of protochlorophyllide (Pchlide) to form chlorophyllide a (Chlide). This reaction is light-independent. The NB-protein (BchN-BchB) is the catalytic component of the complex. The sequence is that of Light-independent protochlorophyllide reductase subunit N from Rubrivivax gelatinosus (strain NBRC 100245 / IL144).